We begin with the raw amino-acid sequence, 156 residues long: ATP synthase subunit b (156 aa).

The chain crosses the membrane as a helical span at residues 11–31; the sequence is AIAFVLFVLFCMKYVWPPIMA.

Belongs to the ATPase B chain family. As to quaternary structure, F-type ATPases have 2 components, F(1) - the catalytic core - and F(0) - the membrane proton channel. F(1) has five subunits: alpha(3), beta(3), gamma(1), delta(1), epsilon(1). F(0) has three main subunits: a(1), b(2) and c(10-14). The alpha and beta chains form an alternating ring which encloses part of the gamma chain. F(1) is attached to F(0) by a central stalk formed by the gamma and epsilon chains, while a peripheral stalk is formed by the delta and b chains.

Its subcellular location is the cell inner membrane. In terms of biological role, f(1)F(0) ATP synthase produces ATP from ADP in the presence of a proton or sodium gradient. F-type ATPases consist of two structural domains, F(1) containing the extramembraneous catalytic core and F(0) containing the membrane proton channel, linked together by a central stalk and a peripheral stalk. During catalysis, ATP synthesis in the catalytic domain of F(1) is coupled via a rotary mechanism of the central stalk subunits to proton translocation. Its function is as follows. Component of the F(0) channel, it forms part of the peripheral stalk, linking F(1) to F(0). In Cronobacter sakazakii (strain ATCC BAA-894) (Enterobacter sakazakii), this protein is ATP synthase subunit b.